A 907-amino-acid polypeptide reads, in one-letter code: CRM-domain containing factor CFM3B, chloroplastic (907 aa).

A chloroplast-targeting transit peptide spans 1–59; the sequence is MAINSSHHFCPMTTTTTTSAKFVDSLGSSFCKFHGTSSSISLRSYRFGFSFMKNVKRLS. Disordered regions lie at residues 62 to 89 and 101 to 123; these read GSSS…SKVV and LGVI…GSSS. Residues 70-84 show a composition bias toward polar residues; sequence RNENWNRTQKQNQFR. CRM domains follow at residues 220 to 316 and 421 to 518; these read MTLS…DGSG and STLG…EVGE. The stretch at 621-654 forms a coiled coil; the sequence is SAKLVRKLERKLAFAEKKLLKAERALAKVEESLK. One can recognise a CRM 3 domain in the interval 663-763; the sequence is EGITEEERFM…KDYKRPTTLR (101 aa). Residues 824–907 form a disordered region; that stretch reads MAYSSDEETE…LQNEELDVQP (84 aa). 2 stretches are compositionally biased toward acidic residues: residues 828–857 and 868–881; these read SDEE…DEEG and TDVE…DTDF. Positions 882–897 are enriched in polar residues; that stretch reads GDNSASSTTPETTFVE.

Interacts with RNA. Part of large ribonucleo-protein particles that contain CAF1 and/or CAF2, and RNC1. Interacts with RFC3 in plastids. As to expression, expressed at low levels in roots and shoots.

Its subcellular location is the plastid. It localises to the chloroplast. Functionally, binds specific group II introns in chloroplasts and facilitates their splicing. Exhibits non-specific action during plastid rRNA biogenesis; RFC3 prevents unaccurate splicing to improve the accuracy of plastid rRNA processing. Acts on subgroup IIB introns. The substrates of the subgroup IIB also require the CRM domain proteins CAF1 or CAF2, with a simultaneous binding of CFM3B and CAF1 or CAF2. Required for seed development. The sequence is that of CRM-domain containing factor CFM3B, chloroplastic from Arabidopsis thaliana (Mouse-ear cress).